A 303-amino-acid chain; its full sequence is Light-independent protochlorophyllide reductase iron-sulfur ATP-binding protein (303 aa).

The segment at 1 to 24 is disordered; the sequence is MSSVLERPAAPAILPSRQDGEGSV. ATP is bound by residues 47–52 and Lys-76; that span reads GIGKST. A Mg(2+)-binding site is contributed by Ser-51. 2 residues coordinate [4Fe-4S] cluster: Cys-132 and Cys-166. Residues 217–218 and 241–243 each bind ATP; these read NR and PDL.

The protein belongs to the NifH/BchL/ChlL family. In terms of assembly, homodimer. Protochlorophyllide reductase is composed of three subunits; BchL, BchN and BchB. Requires [4Fe-4S] cluster as cofactor.

The enzyme catalyses chlorophyllide a + oxidized 2[4Fe-4S]-[ferredoxin] + 2 ADP + 2 phosphate = protochlorophyllide a + reduced 2[4Fe-4S]-[ferredoxin] + 2 ATP + 2 H2O. Its pathway is porphyrin-containing compound metabolism; bacteriochlorophyll biosynthesis (light-independent). Functionally, component of the dark-operative protochlorophyllide reductase (DPOR) that uses Mg-ATP and reduced ferredoxin to reduce ring D of protochlorophyllide (Pchlide) to form chlorophyllide a (Chlide). This reaction is light-independent. The L component serves as a unique electron donor to the NB-component of the complex, and binds Mg-ATP. The polypeptide is Light-independent protochlorophyllide reductase iron-sulfur ATP-binding protein (Rhodospirillum centenum (strain ATCC 51521 / SW)).